The sequence spans 198 residues: ATP-dependent Clp protease proteolytic subunit 2 (198 aa).

The Nucleophile role is filled by S101. H126 is a catalytic residue.

It belongs to the peptidase S14 family. Fourteen ClpP subunits assemble into 2 heptameric rings which stack back to back to give a disk-like structure with a central cavity, resembling the structure of eukaryotic proteasomes.

The protein localises to the cytoplasm. The catalysed reaction is Hydrolysis of proteins to small peptides in the presence of ATP and magnesium. alpha-casein is the usual test substrate. In the absence of ATP, only oligopeptides shorter than five residues are hydrolyzed (such as succinyl-Leu-Tyr-|-NHMec, and Leu-Tyr-Leu-|-Tyr-Trp, in which cleavage of the -Tyr-|-Leu- and -Tyr-|-Trp bonds also occurs).. In terms of biological role, cleaves peptides in various proteins in a process that requires ATP hydrolysis. Has a chymotrypsin-like activity. Plays a major role in the degradation of misfolded proteins. The protein is ATP-dependent Clp protease proteolytic subunit 2 of Thermosynechococcus vestitus (strain NIES-2133 / IAM M-273 / BP-1).